The following is a 125-amino-acid chain: uncharacterized protein (125 aa).

This is an uncharacterized protein from Saccharomyces cerevisiae (strain ATCC 204508 / S288c) (Baker's yeast).